We begin with the raw amino-acid sequence, 265 residues long: tRNA pseudouridine synthase A (265 aa).

The active-site Nucleophile is aspartate 58. Tyrosine 116 is a substrate binding site.

It belongs to the tRNA pseudouridine synthase TruA family. As to quaternary structure, homodimer.

The catalysed reaction is uridine(38/39/40) in tRNA = pseudouridine(38/39/40) in tRNA. Functionally, formation of pseudouridine at positions 38, 39 and 40 in the anticodon stem and loop of transfer RNAs. This chain is tRNA pseudouridine synthase A, found in Neisseria meningitidis serogroup B (strain ATCC BAA-335 / MC58).